Reading from the N-terminus, the 97-residue chain is Bacterial microcompartment shell protein EutM (97 aa).

A BMC domain is found at 3-87; that stretch reads ALGMIETRGL…PHGDLEEVFP (85 aa).

The protein belongs to the bacterial microcompartments protein family. Homohexamer with a central pore of up to 8.6 Angstroms diameter. The hexamers pack into a two-dimensional array. Interacts with EutQ.

Its subcellular location is the bacterial microcompartment. The protein operates within amine and polyamine degradation; ethanolamine degradation. In terms of biological role, probably a major component of the bacterial microcompartment (BMC) shell dedicated to ethanolamine degradation. Each homohexamer has a central pore with an opening of up to 8.6 Angstroms. A positively-charged funnel leads to the pore from each side of the hexamer. The pore probably allows metabolite passage into and out of the BMC. This is Bacterial microcompartment shell protein EutM (eutM) from Escherichia coli O6:H1 (strain CFT073 / ATCC 700928 / UPEC).